We begin with the raw amino-acid sequence, 347 residues long: 4-hydroxyproline 2-epimerase (347 aa).

Residue Gln-85 participates in substrate binding. The active-site Proton acceptor is the Ser-93. Substrate is bound by residues 94-95 (GS) and Asp-251. The active-site Proton donor is the Cys-255. 256 to 257 (GT) lines the substrate pocket.

It belongs to the proline racemase family.

It carries out the reaction trans-4-hydroxy-L-proline = cis-4-hydroxy-D-proline. In terms of biological role, catalyzes the epimerization of trans-4-hydroxy-L-proline (t4LHyp) to cis-4-hydroxy-D-proline (c4DHyp). May be involved in a degradation pathway of t4LHyp. Can also catalyze the epimerization of trans-3-hydroxy-L-proline (t3LHyp) to cis-3-hydroxy-D-proline (c3DHyp) in vitro. Displays no proline racemase activity. The protein is 4-hydroxyproline 2-epimerase of Allorhizobium ampelinum (strain ATCC BAA-846 / DSM 112012 / S4) (Agrobacterium vitis (strain S4)).